The following is a 288-amino-acid chain: 33 kDa chaperonin (288 aa).

2 disulfides stabilise this stretch: cysteine 225–cysteine 227 and cysteine 258–cysteine 261.

The protein belongs to the HSP33 family. Under oxidizing conditions two disulfide bonds are formed involving the reactive cysteines. Under reducing conditions zinc is bound to the reactive cysteines and the protein is inactive.

The protein resides in the cytoplasm. Functionally, redox regulated molecular chaperone. Protects both thermally unfolding and oxidatively damaged proteins from irreversible aggregation. Plays an important role in the bacterial defense system toward oxidative stress. This Shewanella denitrificans (strain OS217 / ATCC BAA-1090 / DSM 15013) protein is 33 kDa chaperonin.